The chain runs to 1912 residues: Receptor-type tyrosine-protein phosphatase delta (1912 aa).

Residues Met-1–Ala-20 form the signal peptide. At Glu-21 to Gly-1266 the chain is on the extracellular side. Ig-like C2-type domains lie at Pro-24–Thr-114 and Pro-126–Tyr-224. Intrachain disulfides connect Cys-45–Cys-98 and Cys-147–Cys-207. Residues Glu-181–Arg-189 form a mini-exon peptide A9; sufficient for interaction with IL1RAPL1 region. A mini-exon peptide B; required for interaction with SLITRK2 and in the function in pre-synaptic differentiation; Acts as an adjustable linker to control relative positions and orientations of the PTPRD second and third immunoglobilin domains for their simultaneous interactions with the first immunoglobilin domain of IL1RAPL1 and IL1RAP; Modulates affinity for IL1RAPL1 and IL1RAP region spans residues Glu-227–Glu-230. The 83-residue stretch at Pro-236–Thr-318 folds into the Ig-like C2-type 3 domain. Asn-254 and Asn-299 each carry an N-linked (GlcNAc...) asparagine glycan. A disulfide bridge links Cys-257 with Cys-302. Fibronectin type-III domains are found at residues Pro-325–Gln-415, Ala-420–Pro-516, Gln-518–Ser-607, Pro-612–Asp-709, Pro-714–Ala-822, Val-823–Glu-916, Phe-921–Val-1016, and Phe-1020–Asp-1106. Asn-724 and Asn-832 each carry an N-linked (GlcNAc...) asparagine glycan. The helical transmembrane segment at Leu-1267–Ile-1287 threads the bilayer. The Cytoplasmic portion of the chain corresponds to Leu-1288–Thr-1912. Positions Glu-1298–Val-1319 are disordered. Positions Val-1310–Val-1319 are enriched in basic and acidic residues. Tyrosine-protein phosphatase domains follow at residues Phe-1357 to Ala-1612 and Met-1644 to Tyr-1903. Substrate is bound by residues Asp-1521, Cys-1553 to Arg-1559, and Gln-1597. The Phosphocysteine intermediate role is filled by Cys-1553. Catalysis depends on Cys-1844, which acts as the Phosphocysteine intermediate.

This sequence belongs to the protein-tyrosine phosphatase family. Receptor class 2A subfamily. Interacts with PPFIA1, PPFIA2 and PPFIA3. Interacts (via extracellular domain) with SLITRK4 (via LRR 1 and 2 repeats). Interacts with SLITRK2; induces presynaptic differentiation. Interacts (via the second immunoglobilin domain) with IL1RAPL1 (via the first immunoglobilin domain); induces pre- and postsynaptic differentiation of neurons and synapse formation. Isoform G, isoform H, isoform I, isoform J, and isoform K do not interact with IL1RAPL1. Interacts (via the third immunoglobilin domain) with IL1RAP (via the first immunoglobilin domain); induces pre- and postsynaptic differentiation of neurons. In terms of processing, a cleavage occurs, separating the extracellular domain from the transmembrane segment. This process called 'ectodomain shedding' is thought to be involved in receptor desensitization, signal transduction and/or membrane localization. In terms of tissue distribution, brain, kidney, heart, and some B-cell lines.

The protein resides in the membrane. It carries out the reaction O-phospho-L-tyrosyl-[protein] + H2O = L-tyrosyl-[protein] + phosphate. Can bidirectionally induce pre- and post-synaptic differentiation of neurons by mediating interaction with IL1RAP and IL1RAPL1 trans-synaptically. Involved in pre-synaptic differentiation through interaction with SLITRK2. The protein is Receptor-type tyrosine-protein phosphatase delta (Ptprd) of Mus musculus (Mouse).